A 181-amino-acid chain; its full sequence is Oligoribonuclease (181 aa).

One can recognise an Exonuclease domain in the interval 8 to 171 (LIWIDLEMTG…DDIRESVAEL (164 aa)). The active site involves Tyr129.

It belongs to the oligoribonuclease family.

It localises to the cytoplasm. Functionally, 3'-to-5' exoribonuclease specific for small oligoribonucleotides. In Yersinia enterocolitica serotype O:8 / biotype 1B (strain NCTC 13174 / 8081), this protein is Oligoribonuclease.